The following is a 243-amino-acid chain: Transcription factor TFIIS homolog (243 aa).

The TFIIS central domain occupies 77–201 (MRDIIQMMFF…SQQKVAEKTS (125 aa)). The TFIIS-type zinc-finger motif lies at 202-242 (QLYKCPNCKQRMCTYREVQTRALDEPSTIFCTCKKCGHEFI). Zn(2+) contacts are provided by cysteine 206, cysteine 209, cysteine 234, and cysteine 237.

This sequence belongs to the TFS-II family.

Functionally, putative initiation factor. Necessary for efficient transcription elongation past template-encoded arresting sites. In Ornithodoros (relapsing fever ticks), this protein is Transcription factor TFIIS homolog.